Here is a 248-residue protein sequence, read N- to C-terminus: 2,3-bisphosphoglycerate-dependent phosphoglycerate mutase (248 aa).

Residues 8-15, 21-22, Arg60, 87-90, Lys98, 114-115, and 183-184 each bind substrate; these read RHGESTWN, TG, ERHY, RR, and GN. The active-site Tele-phosphohistidine intermediate is His9. Glu87 functions as the Proton donor/acceptor in the catalytic mechanism.

It belongs to the phosphoglycerate mutase family. BPG-dependent PGAM subfamily. As to quaternary structure, homodimer.

It catalyses the reaction (2R)-2-phosphoglycerate = (2R)-3-phosphoglycerate. Its pathway is carbohydrate degradation; glycolysis; pyruvate from D-glyceraldehyde 3-phosphate: step 3/5. Catalyzes the interconversion of 2-phosphoglycerate and 3-phosphoglycerate. In Burkholderia lata (strain ATCC 17760 / DSM 23089 / LMG 22485 / NCIMB 9086 / R18194 / 383), this protein is 2,3-bisphosphoglycerate-dependent phosphoglycerate mutase.